The sequence spans 27 residues: Caerulein precursor fragment R1 (27 aa).

As to expression, expressed by the skin glands.

It is found in the secreted. Its function is as follows. Antimicrobial peptide. The polypeptide is Caerulein precursor fragment R1 (Xenopus ruwenzoriensis (Uganda clawed frog)).